A 503-amino-acid chain; its full sequence is Aromatase (503 aa).

Residue C437 coordinates heme.

The protein belongs to the cytochrome P450 family. Heme serves as cofactor.

Its subcellular location is the membrane. The catalysed reaction is testosterone + 3 reduced [NADPH--hemoprotein reductase] + 3 O2 = 17beta-estradiol + formate + 3 oxidized [NADPH--hemoprotein reductase] + 4 H2O + 4 H(+). It carries out the reaction androst-4-ene-3,17-dione + 3 reduced [NADPH--hemoprotein reductase] + 3 O2 = estrone + formate + 3 oxidized [NADPH--hemoprotein reductase] + 4 H2O + 4 H(+). In terms of biological role, catalyzes the formation of aromatic C18 estrogens from C19 androgens. The protein is Aromatase (CYP19A1) of Oryctolagus cuniculus (Rabbit).